We begin with the raw amino-acid sequence, 192 residues long: MPFDSEIVEVKTRPGEEVATLAGGCFWCTEAVFERMEGVNDVVSGYIGGKIKNPNYKQVCGKMTGHAEAVQIYYDPSKTNFEELLKVFFKTHDPTTLNRQGADGGPQYRSSIFVHNDEQREIAKKTMEKLGEEYRDPIVTLIEPATKFYVAEEYHQDYYRRNPNAGYCQAVVAAKVRKFNRNFGDKIKGSGK.

Cysteine 25 is an active-site residue.

The protein belongs to the MsrA Met sulfoxide reductase family.

It carries out the reaction L-methionyl-[protein] + [thioredoxin]-disulfide + H2O = L-methionyl-(S)-S-oxide-[protein] + [thioredoxin]-dithiol. The enzyme catalyses [thioredoxin]-disulfide + L-methionine + H2O = L-methionine (S)-S-oxide + [thioredoxin]-dithiol. Has an important function as a repair enzyme for proteins that have been inactivated by oxidation. Catalyzes the reversible oxidation-reduction of methionine sulfoxide in proteins to methionine. This is Peptide methionine sulfoxide reductase MsrA 1 from Rhodopirellula baltica (strain DSM 10527 / NCIMB 13988 / SH1).